Reading from the N-terminus, the 575-residue chain is MFAVSPSSFSPTTISPRRSGQRNEPRKFSVVRAGAKRILYGKDSREKLQAGIDKLADAVSITLGPRGRNVVLAEKDTIKVINDGVTIAKSIELPDTIENAGATLIQEVAIKMNESAGDGTTTAIILAREMIKAGSLAIAFGANAVSVKNGMNKTVKELVRVLQMKSIPVQGKNDIKAVASISAGNDEFVGNLIAETVEKIGPDGVISIESSSTSETSVIVEEGMKFDKGYMSPHFITNQEKSTVEFDKAKILVTDQKITSAKELVPLLEKTSQLSVPLLIIAEDISAEVLEILVVNKKQGLINVAVVKCPGMLDGKKALLQDIALMTGADYLSGDLGMSLMGATSDQLGVSRRVVITANSTTIVADASTKPEIQARIAQMKKDLAETDNSYLSKKIAERIAKLTGGVAVIKVGGHTETELEDRKLRIEDAKNATFAAMREGIVPGGGATYIHLLDEIPRIKKNLMEDSYEQIGADIVAMALTAPAMAIATNAGVDGSVVVQKTRELEWRSGYNAMSGKYEDLLNAGIADPCRVSRFALQNAVSVAGIILTTQAVLVEKIKQPKPAVPQVPGIPTS.

The span at 1-18 (MFAVSPSSFSPTTISPRR) shows a compositional bias: low complexity. The segment at 1–27 (MFAVSPSSFSPTTISPRRSGQRNEPRK) is disordered. The transit peptide at 1–32 (MFAVSPSSFSPTTISPRRSGQRNEPRKFSVVR) directs the protein to the chloroplast.

Belongs to the chaperonin (HSP60) family. Part of the Cpn60 complex composed of 7 alpha and 7 beta subunits.

The protein resides in the plastid. It localises to the chloroplast. Involved in protein assisted folding. This is Chaperonin 60 subunit alpha 2, chloroplastic (CPN60A2) from Arabidopsis thaliana (Mouse-ear cress).